The sequence spans 417 residues: Probable serine/threonine-protein kinase WNK9 (417 aa).

Positions 1–23 (MDLVEAEAEEQPPDEDGDEEGYV) are disordered. The Protein kinase domain occupies 32–289 (IRYDEIVGSG…ATELLKSSFL (258 aa)). Residues 113–116 (TELF) and Lys-163 contribute to the ATP site. The active-site Proton acceptor is the Asp-180.

It belongs to the protein kinase superfamily. Ser/Thr protein kinase family. WNK subfamily.

The enzyme catalyses L-seryl-[protein] + ATP = O-phospho-L-seryl-[protein] + ADP + H(+). It carries out the reaction L-threonyl-[protein] + ATP = O-phospho-L-threonyl-[protein] + ADP + H(+). The protein is Probable serine/threonine-protein kinase WNK9 (WNK9) of Oryza sativa subsp. japonica (Rice).